A 158-amino-acid polypeptide reads, in one-letter code: U-limacoditoxin(8)-Dv66 (158 aa).

Positions 1–24 (MALRAPWIALCCVLAVLFVVPAAT) are cleaved as a signal peptide. Residues 25–32 (RDEERQKR) constitute a propeptide that is removed on maturation. 2 tandem repeats follow at residues 33-78 (GVDF…RQKR) and 79-124 (GVDF…RQKR). The tract at residues 33–158 (GVDFGLQRGF…AQDPHGPGRK (126 aa)) is 3 X 46 AA tandem repeats. Pro63 is modified (proline amide). The propeptide occupies 64 to 78 (GRKRRDAYEMERQKR). The tract at residues 101–120 (ARAQDPHGPGRKRRDAYEME) is disordered. Pro109 carries the post-translational modification Proline amide. The propeptide occupies 110-124 (GRKRRDAYEMERQKR). Residues 125–158 (GVDFGLQRGFSGSELAKLKLALARAQDPHGPGRK) form a 3; half-length repeat. Pro155 is modified (proline amide).

This sequence belongs to the diuretic hormone class 2 family. Expressed by the venom secretory cell of the spine. The spine is a cuticular structure containing a single large nucleated venom-secreting cell at its base. It is an independent unit capable of producing, storing and injecting venom. On the back of D.vulnerans caterpillars, spines are grouped together by 50 to 100 to form scoli, of which there are eight in D.vulnerans.

Its subcellular location is the secreted. Probable toxin. Does not show insecticidal, antimicrobial and antiparasitic activities. Does not induce increase in intracellular calcium in mouse DRG neurons, suggesting that it does not induce pain. In Doratifera vulnerans (Mottled cup moth), this protein is U-limacoditoxin(8)-Dv66.